The chain runs to 2493 residues: Polyprotein P1234 (2493 aa).

The 232-residue stretch at 28–259 (EAKQVTDNDH…EKRDLLRSWH (232 aa)) folds into the Alphavirus-like MT domain. Positions 244–263 (GSTIYHEKRDLLRSWHLPSV) are nsP1 membrane-binding. A lipid anchor (S-palmitoyl cysteine; by host) is attached at cysteine 419. A (+)RNA virus helicase ATP-binding domain is found at 690-841 (ELVDPPFHEF…HEICTQVFHK (152 aa)). Residue 721 to 728 (GVPGSGKS) coordinates a ribonucleoside 5'-triphosphate. One can recognise a (+)RNA virus helicase C-terminal domain in the interval 842–990 (SISRRCTKSV…IEEWQAEHDA (149 aa)). The 320-residue stretch at 1003-1322 (DVFQNKANVC…STLTNIYTGS (320 aa)) folds into the Peptidase C9 domain. Residues 1004-1023 (VFQNKANVCWAKALVPVLKT) form a nucleolus localization signal region. Cysteine 1012 acts as the For cysteine protease nsP2 activity in catalysis. A Nuclear export signal motif is present at residues 1056-1065 (VRFFGLDLDS). The active-site For cysteine protease nsP2 activity is the histidine 1081. The Nuclear localization signal signature appears at 1179–1183 (PGKKV). In terms of domain architecture, Macro spans 1330–1489 (APSYHVVRGD…TLKEAVARRE (160 aa)). Positions 1339, 1353, 1361, 1441, 1442, and 1443 each coordinate ADP-D-ribose. Cysteine 1596, cysteine 1598, cysteine 1621, and cysteine 1639 together coordinate Zn(2+). Disordered regions lie at residues 1664–1684 (PVEE…TPEQ) and 1790–1826 (APRT…STPP). The span at 1814–1823 (RASSRTSLVS) shows a compositional bias: polar residues. 2 tandem repeats follow at residues 1818–1839 (RTSL…ELEA) and 1852–1873 (RTSL…EFEA). Residues 1818-1873 (RTSLVSTPPGVNRVITREELEALTPSRAPSRSASRTSLVSNPPGVNRVITREEFEA) form a 2 X 21 AA approximate repeats, binding to host FXR family members region. In terms of domain architecture, RdRp catalytic spans 2250–2365 (DCVLETDIAS…KGVKSDKLMA (116 aa)).

In terms of assembly, interacts with non-structural protein 3. Interacts with RNA-directed RNA polymerase nsP4. Interacts with protease nsP2. interacts with itself. As to quaternary structure, interacts with mRNA-capping enzyme nsP1. Interacts with host DDX1. Interacts with host DDX3. Interacts (via C-terminus) with host FXR1; this interaction inhibits the formation of host stress granules on viral mRNAs and the nsp3-FXR1 complexes bind viral RNAs and probably orchestrate the assembly of viral replication complexes. Interacts (via C-terminus) with host FXR2; this interaction inhibits the formation of host stress granules on viral mRNAs and the nsp3-FXR2 complexes bind viral RNAs and probably orchestrate the assembly of viral replication complexes. Interacts (via C-terminus) with host FMR1; this interaction inhibits the formation of host stress granules on viral mRNAs and the nsp3-FMR1 complexes bind viral RNAs and probably orchestrate the assembly of viral replication complexes. Interacts with mRNA-capping enzyme nsP1. Interacts with protease nsP2. interacts with itself. In terms of assembly, interacts with RNA-directed RNA polymerase nsP4. Interacts with mRNA-capping enzyme nsP1. Interacts with KPNA1/karyopherin-alpha1; this interaction probably allows the active transport of protease nsP2 into the host nucleus. Mg(2+) serves as cofactor. It depends on Mn(2+) as a cofactor. Specific enzymatic cleavages in vivo yield mature proteins. The processing of the polyprotein is temporally regulated. In early stages (1.7 hpi), P1234 is first cleaved in trans through its nsP2 protease activity, releasing P123' and nsP4, which associate to form the early replication complex. At the same time, P1234 is also cut at the nsP1/nsP2 site early in infection but with lower efficiency. After replication of the viral minus-strand RNAs (4 hpi), the polyproteins are cut at the nsP1/nsP2 and nsP2/nsP3 sites very efficiently, preventing accumulation of P123' and P1234 and allowing the formation of the late replication complex. NsP3'/nsP4 site is not cleaved anymore and P34 is produced rather than nsP4. Post-translationally, specific enzymatic cleavages in vivo yield mature proteins. The processing of the polyprotein is temporally regulated. In early stages (1.7 hpi), P123 is cleaved at the nsP1/nsP2 site with low efficiency. After replication of the viral minus-strand RNAs (4 hpi), the polyproteins are cut at the nsP1/nsP2 and nsP2/nsP3 sites very efficiently, preventing accumulation of P123 and allowing the formation of the late replication complex. In terms of processing, specific enzymatic cleavages in vivo yield mature proteins. The processing of the polyprotein is temporally regulated. In early stages (1.7 hpi), P123' is cleaved at the nsP1/nsP2 site with low efficiency. After replication of the viral minus-strand RNAs (4 hpi), the polyproteins are cut at the nsP1/nsP2 and nsP2/nsP3 sites very efficiently, preventing accumulation of P123' and allowing the formation of the late replication complex. Palmitoylated by host palmitoyltransferases ZDHHC2 and ZDHHC19. Post-translationally, phosphorylated by host on serines and threonines. In terms of processing, ubiquitinated; targets the protein for rapid degradation via the ubiquitin system. Nsp4 is present in extremely low quantities due to low frequency of translation through the amber stop-codon and the degradation by the ubiquitin pathway.

It is found in the host cytoplasmic vesicle membrane. Its subcellular location is the host cell membrane. It localises to the host cell projection. The protein localises to the host filopodium. The protein resides in the host nucleus. It is found in the host cytoplasm. The enzyme catalyses GTP + S-adenosyl-L-methionine = N(7)-methyl-GTP + S-adenosyl-L-homocysteine. The catalysed reaction is N(7)-methyl-GTP + L-histidyl-[protein] = N(tele)-(N(7)-methylguanosine 5'-phospho)-L-histidyl-[protein] + diphosphate. It carries out the reaction N(tele)-(N(7)-methylguanosine 5'-phospho)-L-histidyl-[protein] + a 5'-end diphospho-(purine-ribonucleoside) in mRNA + H(+) = a 5'-end (N(7)-methyl 5'-triphosphoguanosine)-(purine-ribonucleoside) in mRNA + L-histidyl-[protein]. It catalyses the reaction a 5'-end triphospho-ribonucleoside in mRNA + H2O = a 5'-end diphospho-ribonucleoside in mRNA + phosphate + H(+). The enzyme catalyses a ribonucleoside 5'-triphosphate + H2O = a ribonucleoside 5'-diphosphate + phosphate + H(+). The catalysed reaction is ATP + H2O = ADP + phosphate + H(+). It carries out the reaction RNA(n) + a ribonucleoside 5'-triphosphate = RNA(n+1) + diphosphate. It catalyses the reaction 4-O-(ADP-D-ribosyl)-L-aspartyl-[protein] + H2O = L-aspartyl-[protein] + ADP-D-ribose + H(+). The enzyme catalyses 5-O-(ADP-D-ribosyl)-L-glutamyl-[protein] + H2O = L-glutamyl-[protein] + ADP-D-ribose + H(+). The catalysed reaction is RNA(n) + ATP = RNA(n)-3'-adenine ribonucleotide + diphosphate. It carries out the reaction ADP-alpha-D-ribose 1''-phosphate + H2O = ADP-D-ribose + phosphate. Its activity is regulated as follows. Inhibited by sinefungin. Functionally, inactive precursor of the viral replicase, which is activated by cleavages carried out by the viral protease nsP2. Its function is as follows. The early replication complex formed by the polyprotein P123 and nsP4 synthesizes the minus-strand RNAs (antigenome). Polyprotein P123 is a short-lived polyprotein that accumulates during early stage of infection. As soon P123 is cleaved into mature proteins, the plus-strand RNAs synthesis begins. The early replication complex formed by the polyprotein P123' and nsP4 synthesizes minus-strand RNAs (antigenome). Polyprotein P123' is a short-lived polyprotein that accumulates during early stage of infection. As soon P123' is cleaved into mature proteins, the plus-strand RNAs synthesis begins. In terms of biological role, cytoplasmic capping enzyme that catalyzes two virus-specific reactions: methyltransferase and nsP1 guanylyltransferase. mRNA-capping is necessary since all viral RNAs are synthesized in the cytoplasm, and host capping enzymes are restricted to the nucleus. The enzymatic reaction involves a covalent link between 7-methyl-GMP and nsP1, whereas eukaryotic capping enzymes form a covalent complex only with GMP. NsP1 capping consists in the following reactions: GTP is first methylated into 7-methyl-GMP and then is covalently linked to nsP1 to form the m7GMp-nsP1 complex from which 7-methyl-GMP complex is transferred to the mRNA to create the cap structure. NsP1 is also needed for the initiation of the minus-strand RNAs synthesis. Probably serves as a membrane anchor for the replication complex composed of nsP1-nsP4. Nsp1 is needed for the initiation of the minus-strand RNAs synthesis. Palmitoylated nsP1 is remodeling host cell cytoskeleton, and induces filopodium-like structure formation at the surface of the host cell. Functionally, multifunctional protein whose N-terminus is part of the RNA polymerase complex and displays NTPase, RNA triphosphatase and helicase activities. NTPase and RNA triphosphatase are involved in viral RNA capping and helicase keeps a check on the dsRNA replication intermediates. The C-terminus harbors a protease that specifically cleaves the polyproteins and releases the mature proteins. Required for the shutoff of minus-strand RNAs synthesis. Inhibits host translation to ensure maximal viral gene expression and evade host immune response. Its function is as follows. Seems to be essential for minus-strand RNAs and subgenomic 26S mRNAs synthesis. Displays mono-ADP-ribosylhydrolase activity. ADP-ribosylation is a post-translational modification that controls various processes of the host cell and the virus probably needs to revert it for optimal viral replication. Binds proteins of FXR family and sequesters them into the viral RNA replication complexes thereby inhibiting the formation of host stress granules on viral mRNAs. The nsp3-FXR complexes bind viral RNAs and probably orchestrate the assembly of viral replication complexes, thanks to the ability of FXR family members to self-assemble and bind DNA. Seems to be essential for minus-strand RNAs and subgenomic 26S mRNAs synthesis. Displays mono-ADP-ribosylhydrolase activity. ADP-ribosylation is a post-translational modification that controls various processes of the host cell and the virus probably needs to revert it for optimal viral replication. Binds proteins of FXR family and sequesters them into the viral RNA replication complexes thereby inhibiting the formation of host stress granules on viral mRNAs. The nsp3'-FXR complexes bind viral RNAs and probably orchestrate the assembly of viral replication complexes, thanks to the ability of FXR family members to self-assemble and bind DNA. In terms of biological role, RNA dependent RNA polymerase. Replicates genomic and antigenomic RNA by recognizing replications specific signals. The early replication complex formed by the polyprotein P123 and nsP4 synthesizes minus-strand RNAs. The late replication complex composed of fully processed nsP1-nsP4 is responsible for the production of genomic and subgenomic plus-strand RNAs. The polypeptide is Polyprotein P1234 (Bos taurus (Bovine)).